A 128-amino-acid polypeptide reads, in one-letter code: Small ribosomal subunit protein uS10 (128 aa).

It belongs to the universal ribosomal protein uS10 family.

This is Small ribosomal subunit protein uS10 (RPS20) from Oryza sativa subsp. japonica (Rice).